The sequence spans 165 residues: Nucleotide-binding protein PMM0481 (165 aa).

The protein belongs to the YajQ family.

In terms of biological role, nucleotide-binding protein. In Prochlorococcus marinus subsp. pastoris (strain CCMP1986 / NIES-2087 / MED4), this protein is Nucleotide-binding protein PMM0481.